A 188-amino-acid chain; its full sequence is Protein SSX4 (188 aa).

Positions 20–83 constitute a KRAB-related domain; that stretch reads KLRKAFDDIA…KRAADFHGND (64 aa). A compositionally biased stretch (basic and acidic residues) spans 116 to 127; that stretch reads PAEEENGLKEVP. Residues 116–167 form a disordered region; sequence PAEEENGLKEVPEASGPQNDGKQLCPPGNPSTLEKINKTSGPKRGKHAWTHR. The segment covering 145-155 has biased composition (polar residues); that stretch reads PSTLEKINKTS. Basic residues predominate over residues 156 to 167; the sequence is GPKRGKHAWTHR.

This sequence belongs to the SSX family.

Functionally, could act as a modulator of transcription. This chain is Protein SSX4 (SSX4), found in Homo sapiens (Human).